Consider the following 258-residue polypeptide: MKKAYLTVVSNREIADHIYEMTLKGDLVDSFQTAGQFLHIKVSESMTPLLRRPISIANIHAEKQEATIIYRAEGEGTKLLSQKRDGESIDVLGPLGNGYDPSVVQSGQTALLVGGGIGVPPLYELSKRLTKKGVIVKHVLGFQSKKDVFYEEKFQALGDTFIATVDGTYGAKGFVTNVIEENDLSFDVMLSCGPTPMLKALKDSYPDKPVYISMEERMGCGIGACFACVCHTDQHEKAYVKVCLDGPVFKAEEVALSC.

The 101-residue stretch at 1–101 (MKKAYLTVVS…LGPLGNGYDP (101 aa)) folds into the FAD-binding FR-type domain. FAD-binding positions include 52-55 (RPIS), 69-71 (IYR), and 76-77 (GT). Residues Cys-220, Cys-225, Cys-228, and Cys-243 each contribute to the [2Fe-2S] cluster site.

This sequence belongs to the PyrK family. As to quaternary structure, heterotetramer of 2 PyrK and 2 PyrD type B subunits. The cofactor is [2Fe-2S] cluster. Requires FAD as cofactor.

It participates in pyrimidine metabolism; UMP biosynthesis via de novo pathway; orotate from (S)-dihydroorotate (NAD(+) route): step 1/1. Responsible for channeling the electrons from the oxidation of dihydroorotate from the FMN redox center in the PyrD type B subunit to the ultimate electron acceptor NAD(+). The protein is Dihydroorotate dehydrogenase B (NAD(+)), electron transfer subunit of Bacillus pumilus (strain SAFR-032).